A 183-amino-acid chain; its full sequence is Microfibrillar-associated protein 2 (183 aa).

The signal sequence occupies residues 1 to 17 (MRAASLFLLFLPAGLLA). Gln-18 is subject to Pyrrolidone carboxylic acid. Residue Gln-20 forms an Isoglutamyl lysine isopeptide (Gln-Lys) (interchain with K-?) linkage. 3 positions are modified to sulfotyrosine: Tyr-47, Tyr-48, and Tyr-50. Residues 153 to 183 (CRDKFSKCGVLASSGLCQSVAAACARSCGGC) enclose the ShKT domain. Cystine bridges form between Cys-153-Cys-183, Cys-160-Cys-176, and Cys-169-Cys-180.

Belongs to the MFAP family. As to quaternary structure, forms a ternary complex with BGN and ELN. Interacts with FBN1 (via N-terminal domain) and FBN2. Post-translationally, O-glycosylated; glycans consist of Gal(beta1-3)GalNAc. Forms intermolecular disulfide bonds either with other MAGP-1 molecules or with other components of the microfibrils. In terms of processing, forms transglutaminase cross-links with tropoelastin.

The protein localises to the secreted. Its subcellular location is the extracellular space. It is found in the extracellular matrix. Component of the elastin-associated microfibrils. This Bos taurus (Bovine) protein is Microfibrillar-associated protein 2 (MFAP2).